Consider the following 302-residue polypeptide: MSTKFNVKTFQGMILALQEYWANVGCTIVQPFDMEVGAGTSHPMTALRALGPEPMAFAYVQPSRRPTDGRYGENPNRLQHYYQFQVVIKPSPDNIQELYLGSLKMLGFDPTQHDIRFVEDNWENPTLGAWGLGWEVWLNGMEVTQFTYFQQVGGLECKPVTGEVTYGLERLAMYIQGVDSVYDLVYSDGPLGKTTYGDVFHQNEVEQSTYNFEYADVDFLFKAFEQYEKEAQELLALEKPLPLPAYERVLKAAHSFNMLDARKAISVTERQRYILRIRALTKGVAEAYYASREALGFPGCNK.

This sequence belongs to the class-II aminoacyl-tRNA synthetase family. As to quaternary structure, tetramer of two alpha and two beta subunits.

The protein localises to the cytoplasm. It carries out the reaction tRNA(Gly) + glycine + ATP = glycyl-tRNA(Gly) + AMP + diphosphate. The polypeptide is Glycine--tRNA ligase alpha subunit (Haemophilus ducreyi (strain 35000HP / ATCC 700724)).